A 210-amino-acid polypeptide reads, in one-letter code: Thymidylate kinase (210 aa).

Residue 10 to 17 (GPEGAGKS) coordinates ATP.

This sequence belongs to the thymidylate kinase family.

The catalysed reaction is dTMP + ATP = dTDP + ADP. Its function is as follows. Phosphorylation of dTMP to form dTDP in both de novo and salvage pathways of dTTP synthesis. This chain is Thymidylate kinase, found in Pseudomonas putida (strain GB-1).